Consider the following 205-residue polypeptide: Cytochrome c biogenesis ATP-binding export protein CcmA 2 (205 aa).

Positions 2-205 constitute an ABC transporter domain; the sequence is LEARDLYCER…LALTGGGAGL (204 aa). An ATP-binding site is contributed by 34–41; the sequence is GGNGAGKT.

This sequence belongs to the ABC transporter superfamily. CcmA exporter (TC 3.A.1.107) family. As to quaternary structure, the complex is composed of two ATP-binding proteins (CcmA) and two transmembrane proteins (CcmB).

It localises to the cell inner membrane. It carries out the reaction heme b(in) + ATP + H2O = heme b(out) + ADP + phosphate + H(+). Part of the ABC transporter complex CcmAB involved in the biogenesis of c-type cytochromes; once thought to export heme, this seems not to be the case, but its exact role is uncertain. Responsible for energy coupling to the transport system. This is Cytochrome c biogenesis ATP-binding export protein CcmA 2 from Salmonella typhimurium (strain LT2 / SGSC1412 / ATCC 700720).